The sequence spans 267 residues: Putative [LysW]-aminoadipate/[LysW]-glutamate kinase (267 aa).

Substrate is bound by residues 37 to 38, arginine 64, and asparagine 169; that span reads GG.

The protein belongs to the acetylglutamate kinase family. LysZ subfamily.

It is found in the cytoplasm. The enzyme catalyses [amino-group carrier protein]-C-terminal-N-(1,4-dicarboxybutan-1-yl)-L-glutamine + ATP = [amino-group carrier protein]-C-terminal-N-(1-carboxy-5-phosphooxy-5-oxopentan-1-yl)-L-glutamine + ADP. It carries out the reaction [amino-group carrier protein]-C-terminal-gamma-(L-glutamyl)-L-glutamate + ATP = [amino-group carrier protein]-C-terminal-gamma-(5-phospho-L-glutamyl)-L-glutamate + ADP. It participates in amino-acid biosynthesis; L-lysine biosynthesis via AAA pathway; L-lysine from L-alpha-aminoadipate (Thermus route): step 2/5. It functions in the pathway amino-acid biosynthesis; L-arginine biosynthesis. Involved in both the arginine and lysine biosynthetic pathways. Phosphorylates the LysW-bound precursors glutamate (for arginine biosynthesis), respectively alpha-aminoadipate (for lysine biosynthesis). In Nitrosopumilus maritimus (strain SCM1), this protein is Putative [LysW]-aminoadipate/[LysW]-glutamate kinase.